Here is a 373-residue protein sequence, read N- to C-terminus: Zinc finger protein CONSTANS (373 aa).

The B box-type 1; atypical zinc-finger motif lies at 15 to 57; the sequence is NRARPCDTCRSNACTVYCHADSAYLCMSCDAQVHSANRVASRH. The Zn(2+) site is built by Cys20, Cys23, Cys43, His48, Cys63, Cys66, Cys86, and His91. A B box-type 2; atypical zinc finger spans residues 58–108; sequence KRVRVCESCERAPAAFLCEADDASLCTACDSEVHSANPLARRHQRVPILPI. Residues 109-120 are compositionally biased toward polar residues; it reads SGNSFSSMTTTH. The interval 109–130 is disordered; it reads SGNSFSSMTTTHHQSEKTMTDP. The span at 121-130 shows a compositional bias: basic and acidic residues; the sequence is HQSEKTMTDP. In terms of domain architecture, CCT spans 306 to 348; that stretch reads REARVLRYREKRKTRKFEKTIRYASRKAYAEIRPRVNGRFAKR.

It belongs to the CONSTANS family. As to quaternary structure, interacts with ADO3, SPA1, SPA2, SPA3 and SPA4. Interacts with MRG1 and MRG2 (via MRG domain). Interacts (via B-box) with MIP1A. Interacts with AS1 to form a functional complex regulating FT expression. Interacts with NFYC9. Component of a red light-dependent nuclear complex made of PHL, PHYB and CO. Interacts directly with PHL in the presence of PHYB. As to expression, expressed in leaves, shoots and shoot apical meristem. Detected in the vascular tissue of the hypocotyl, the cotyledons and the leaves. Restricted to the protoxylem and phloem in young inflorescence stems and to the phloem only in older inflorescences. Also detected in the vascular tissue of the root.

It is found in the nucleus. Transcription factor that acts in the long day flowering pathway and may mediate between the circadian clock and the control of flowering. Plays a role in the regulation of flowering time by acting on 'SUPPRESSOR OF OVEREXPRESSION OF CO1', 'TERMINAL FLOWER 1' and 'FLOWERING LOCUS T'. Also regulates P5CS2 and ACS10 (involved in proline and ethylene biosynthesis, respectively). Regulates the expression of NAKR1 by binding to the 5'-TGTG(N2-3)ATG-3' motif. The chain is Zinc finger protein CONSTANS from Arabidopsis thaliana (Mouse-ear cress).